Consider the following 243-residue polypeptide: NADH-ubiquinone oxidoreductase chain 6 (243 aa).

Helical transmembrane passes span 16 to 36, 41 to 61, 69 to 89, 104 to 124, and 201 to 221; these read ISSVLDIISILAIFCGISVIV, IISVLFLIGLFASVSSYLILL, AYLIVYIGAISILFLFILMLI, IPLTIILGISLSYSLFQLLPY, and IWLFLASFILLLAMVGSIVII.

This sequence belongs to the complex I subunit 6 family.

It is found in the mitochondrion membrane. It carries out the reaction a ubiquinone + NADH + 5 H(+)(in) = a ubiquinol + NAD(+) + 4 H(+)(out). Core subunit of the mitochondrial membrane respiratory chain NADH dehydrogenase (Complex I) that is believed to belong to the minimal assembly required for catalysis. Complex I functions in the transfer of electrons from NADH to the respiratory chain. The immediate electron acceptor for the enzyme is believed to be ubiquinone. The sequence is that of NADH-ubiquinone oxidoreductase chain 6 (ndh-6) from Neurospora crassa (strain ATCC 24698 / 74-OR23-1A / CBS 708.71 / DSM 1257 / FGSC 987).